We begin with the raw amino-acid sequence, 457 residues long: Putative hexose transporter 12 (457 aa).

The Cytoplasmic segment spans residues 1–2; that stretch reads MG. Residues 3–23 form a helical membrane-spanning segment; that stretch reads LIVSIFNIGCAIGGIVLSKVG. At 24-29 the chain is on the extracellular side; it reads DIYGRR. A helical transmembrane segment spans residues 30–50; it reads IGLITVTAIYVVGILIQITSI. Over 51–60 the chain is Cytoplasmic; it reads NKWYQYFIGR. The helical transmembrane segment at 61 to 81 threads the bilayer; that stretch reads IISGIGVGGIAVLSPMLISEV. Topologically, residues 82-87 are extracellular; sequence APKHIR. The helical transmembrane segment at 88–108 threads the bilayer; that stretch reads GTLVQLYQLMGTMGIFLGYCT. Over 109-122 the chain is Cytoplasmic; it reads NYGTKNYHNATQWR. A helical membrane pass occupies residues 123 to 143; the sequence is VGLGLCFAWATFMVSGMMFVP. Residues 144–247 lie on the Extracellular side of the membrane; that stretch reads ESPRYLIEVG…KSVGLKDSFQ (104 aa). A glycan (N-linked (GlcNAc...) asparagine) is linked at Asn194. Residues 248-268 form a helical membrane-spanning segment; the sequence is TSIIIGVVNFFSSFIAVYTIE. Residues 269–274 lie on the Cytoplasmic side of the membrane; sequence RFGRRT. A helical membrane pass occupies residues 275–295; the sequence is CLLWGAASMLCCFAVFASVGV. The Extracellular portion of the chain corresponds to 296–319; the sequence is TKLWPQGSSHQDITSQGAGNCMIV. The helical transmembrane segment at 320–340 threads the bilayer; sequence FTMFFIFSFATTWAGGCFVIV. Residues 341-353 lie on the Cytoplasmic side of the membrane; it reads SETFPLRAKSRGM. The helical transmembrane segment at 354–374 threads the bilayer; the sequence is AIATAANWMWGFLISFFTPFI. At 375–379 the chain is on the extracellular side; that stretch reads TGAIN. A helical transmembrane segment spans residues 380–400; sequence FYYGYVFLGCLVFAYFYVFFF. At 401-457 the chain is on the cytoplasmic side; the sequence is VPETKGLTLEEVNTMWLEGVPAWKSASWVPPERRTADYDADAIDHDNRPIYKRFFSS.

It belongs to the major facilitator superfamily. Sugar transporter (TC 2.A.1.1) family.

Its subcellular location is the membrane. Its function is as follows. Probable glucose transporter. The chain is Putative hexose transporter 12 (HXT12) from Saccharomyces cerevisiae (strain ATCC 204508 / S288c) (Baker's yeast).